The primary structure comprises 346 residues: MTNKSSLSYKDAGVDIDAGNALVDRIKSVVKETRRPEVMGGLGGFGALCAIPTKYREPILVSGTDGVGTKLRLAMDLNRHDDIGIDLVAMCVNDLIVQGAEPLFFLDYYATGKLDVDTAARVVTGIAEGCKQSGCALVGGETAEMPGMYHGNDYDIAGFCVGVVEKSQIIDGSKVKAGDALIALASSGPHSNGYSLIRKILEVSGACAETTPLGDTSLADKLLAPTRIYVKSLLSLIENVDIHAVAHITGGGFWENIPRVLPENTQARINSQSWQWPEVFNWLQQAGNVSTHEMYRTFNCGVGLLIAVSQADVEKTLSHLNACGEKAWLIGDIAPQAAGDAQVIIN.

This sequence belongs to the AIR synthase family.

It localises to the cytoplasm. The enzyme catalyses 2-formamido-N(1)-(5-O-phospho-beta-D-ribosyl)acetamidine + ATP = 5-amino-1-(5-phospho-beta-D-ribosyl)imidazole + ADP + phosphate + H(+). Its pathway is purine metabolism; IMP biosynthesis via de novo pathway; 5-amino-1-(5-phospho-D-ribosyl)imidazole from N(2)-formyl-N(1)-(5-phospho-D-ribosyl)glycinamide: step 2/2. The sequence is that of Phosphoribosylformylglycinamidine cyclo-ligase from Proteus mirabilis (strain HI4320).